The sequence spans 129 residues: Small ribosomal subunit protein uS11 (129 aa).

It belongs to the universal ribosomal protein uS11 family. As to quaternary structure, part of the 30S ribosomal subunit. Interacts with proteins S7 and S18. Binds to IF-3.

Its function is as follows. Located on the platform of the 30S subunit, it bridges several disparate RNA helices of the 16S rRNA. Forms part of the Shine-Dalgarno cleft in the 70S ribosome. This chain is Small ribosomal subunit protein uS11, found in Enterobacter sp. (strain 638).